The primary structure comprises 45 residues: Large ribosomal subunit protein bL34c (45 aa).

Residues M1 to S21 are disordered. The segment covering N10 to F19 has biased composition (basic residues).

The protein belongs to the bacterial ribosomal protein bL34 family.

It localises to the plastid. Its subcellular location is the chloroplast. The polypeptide is Large ribosomal subunit protein bL34c (rpl34) (Cyanidium caldarium (Red alga)).